The primary structure comprises 213 residues: NADH-quinone oxidoreductase subunit I (213 aa).

2 consecutive 4Fe-4S ferredoxin-type domains span residues 74-103 (RFIESENERCIGCGLCEKICISNCIRMETS) and 113-142 (GNYSINLGRCIYCGFCAEVCPELAIVHGTE). [4Fe-4S] cluster is bound by residues Cys83, Cys86, Cys89, Cys93, Cys122, Cys125, Cys128, and Cys132.

The protein belongs to the complex I 23 kDa subunit family. In terms of assembly, NDH-1 is composed of 14 different subunits. Subunits NuoA, H, J, K, L, M, N constitute the membrane sector of the complex. The cofactor is [4Fe-4S] cluster.

It localises to the cell inner membrane. The enzyme catalyses a quinone + NADH + 5 H(+)(in) = a quinol + NAD(+) + 4 H(+)(out). NDH-1 shuttles electrons from NADH, via FMN and iron-sulfur (Fe-S) centers, to quinones in the respiratory chain. The immediate electron acceptor for the enzyme in this species is believed to be ubiquinone. Couples the redox reaction to proton translocation (for every two electrons transferred, four hydrogen ions are translocated across the cytoplasmic membrane), and thus conserves the redox energy in a proton gradient. The sequence is that of NADH-quinone oxidoreductase subunit I from Campylobacter jejuni subsp. jejuni serotype O:6 (strain 81116 / NCTC 11828).